The chain runs to 908 residues: DNA mismatch repair protein MutS (908 aa).

Residue 659–666 coordinates ATP; that stretch reads GPNMAGKS.

This sequence belongs to the DNA mismatch repair MutS family.

This protein is involved in the repair of mismatches in DNA. It is possible that it carries out the mismatch recognition step. This protein has a weak ATPase activity. The protein is DNA mismatch repair protein MutS of Parvibaculum lavamentivorans (strain DS-1 / DSM 13023 / NCIMB 13966).